The following is a 1093-amino-acid chain: Small G protein signaling modulator 1 (1093 aa).

One can recognise an RUN domain in the interval 36-190; that stretch reads HEDSSHIISF…EYTKMKTADH (155 aa). The tract at residues 256 to 297 is important for interaction with RAB9A and RAB9B; the sequence is LLYGKNNVLVQPRDDMEAVPGYLSLHQTADVMTLKWTPNQLM. Positions 301-350 are required for interaction with RAP family members; the sequence is VGDLDYEKSVYWDYAVTIRLEEIVYLHCHQQVDSGGTVVLVSQDGIQRPP. 3 disordered regions span residues 377–412, 645–778, and 810–838; these read DPPL…KEDD, DSTI…ELAV, and DGAV…EEPE. Residues 385 to 397 are compositionally biased toward basic residues; it reads GKGKVFPKLRKRS. The 465-residue stretch at 562 to 1026 folds into the Rab-GAP TBC domain; it reads GVQPEIRRAV…SVWETIWAAK (465 aa). The segment covering 647–676 has biased composition (polar residues); that stretch reads TISNESSQSCSSGRQNLRLQSDSSSSTQVF. The span at 687–696 shows a compositional bias: basic and acidic residues; that stretch reads AEGRSEEKHP. Over residues 702-736 the composition is skewed to polar residues; it reads NPANGTCSPDSGHPSSHNFSSGLSEHSEPSLSTED. Basic and acidic residues-rich tracts occupy residues 766–776 and 820–829; these read TSRDEAPREEL and EADKPSRADS.

This sequence belongs to the RUTBC family. Interacts with RAB9A (GTP-bound form) and RAB9B. Interacts with RAB3A, RAB4A, RAB5A, RAB8A, RAB11A, RAP1A, RAP1B, RAP2A and RAP2B. No interaction with RAB27A. As to expression, expressed only in brain.

The protein localises to the golgi apparatus. It is found in the trans-Golgi network. Its subcellular location is the cytoplasm. It localises to the cytoplasmic vesicle membrane. Functionally, interacts with numerous Rab family members, functioning as Rab effector for some, and as GTPase activator for others. Promotes GTP hydrolysis by RAB34 and RAB36. Probably functions as a GTPase effector with RAB9A and RAB9B; does not stimulate GTP hydrolysis with RAB9A and RAB9B. In Mus musculus (Mouse), this protein is Small G protein signaling modulator 1 (Sgsm1).